A 253-amino-acid chain; its full sequence is uncharacterized protein (253 aa).

The NADP(+) site is built by Ile17, Ser36, Asp62, Asn89, Lys123, Tyr158, Lys162, Val191, and Thr193. The active-site Proton acceptor is Tyr158. The active-site Lowers pKa of active site Tyr is the Lys162.

Belongs to the short-chain dehydrogenases/reductases (SDR) family.

The protein localises to the cytoplasm. The protein resides in the nucleus. This is an uncharacterized protein from Schizosaccharomyces pombe (strain 972 / ATCC 24843) (Fission yeast).